The following is a 327-amino-acid chain: Porphobilinogen deaminase (327 aa).

Cys251 carries the post-translational modification S-(dipyrrolylmethanemethyl)cysteine.

This sequence belongs to the HMBS family. Dipyrromethane is required as a cofactor.

The enzyme catalyses 4 porphobilinogen + H2O = hydroxymethylbilane + 4 NH4(+). The protein operates within porphyrin-containing compound metabolism; protoporphyrin-IX biosynthesis; coproporphyrinogen-III from 5-aminolevulinate: step 2/4. Its function is as follows. Catalyzes the tetrapolymerization of the monopyrrole porphobilinogen (PBG) into the hydroxymethylbilane pre-uroporphyrinogen in several discrete steps. This Saccharomyces cerevisiae (strain ATCC 204508 / S288c) (Baker's yeast) protein is Porphobilinogen deaminase (HEM3).